The primary structure comprises 303 residues: ATP phosphoribosyltransferase (303 aa).

It belongs to the ATP phosphoribosyltransferase family. Long subfamily. Requires Mg(2+) as cofactor.

It localises to the cytoplasm. The catalysed reaction is 1-(5-phospho-beta-D-ribosyl)-ATP + diphosphate = 5-phospho-alpha-D-ribose 1-diphosphate + ATP. Its pathway is amino-acid biosynthesis; L-histidine biosynthesis; L-histidine from 5-phospho-alpha-D-ribose 1-diphosphate: step 1/9. Feedback inhibited by histidine. In terms of biological role, catalyzes the condensation of ATP and 5-phosphoribose 1-diphosphate to form N'-(5'-phosphoribosyl)-ATP (PR-ATP). Has a crucial role in the pathway because the rate of histidine biosynthesis seems to be controlled primarily by regulation of HisG enzymatic activity. The polypeptide is ATP phosphoribosyltransferase (Stenotrophomonas maltophilia (strain R551-3)).